The chain runs to 181 residues: Bifunctional protein PyrR (181 aa).

Residues Val101 to Thr113 carry the PRPP-binding motif.

The protein belongs to the purine/pyrimidine phosphoribosyltransferase family. PyrR subfamily.

It carries out the reaction UMP + diphosphate = 5-phospho-alpha-D-ribose 1-diphosphate + uracil. In terms of biological role, regulates the transcription of the pyrimidine nucleotide (pyr) operon in response to exogenous pyrimidines. Its function is as follows. Also displays a weak uracil phosphoribosyltransferase activity which is not physiologically significant. The polypeptide is Bifunctional protein PyrR (Desulfosudis oleivorans (strain DSM 6200 / JCM 39069 / Hxd3) (Desulfococcus oleovorans)).